The following is a 450-amino-acid chain: Exodeoxyribonuclease 7 large subunit (450 aa).

The protein belongs to the XseA family. In terms of assembly, heterooligomer composed of large and small subunits.

Its subcellular location is the cytoplasm. It carries out the reaction Exonucleolytic cleavage in either 5'- to 3'- or 3'- to 5'-direction to yield nucleoside 5'-phosphates.. Bidirectionally degrades single-stranded DNA into large acid-insoluble oligonucleotides, which are then degraded further into small acid-soluble oligonucleotides. In Listeria innocua serovar 6a (strain ATCC BAA-680 / CLIP 11262), this protein is Exodeoxyribonuclease 7 large subunit.